A 483-amino-acid chain; its full sequence is MHQMTLAEIARGLAEKKFSSEELTRVLLSRIATLDPQLNSFISLTEDLAITQAQAADARRAAGENGPLLGAPLAHKDLFCTQGIRTSCGSRMLDNFKAPYDATVVSKLASAGTVTLGKTNMDEFAMGSANESSHYGAVKNPWNLQCVPGGSSGGSAAAVAARLLPAATGTDTGGSIRQPAALTNLTGLKPTYGRVSRWGMIAYASSLDQAGPMARTAEDCALLLQGMAGFDPQDSTSIDEPVPDYSASLNTSLKGLRIGVPKEYFSAGLDPRIAQLVHESVKELEKLGAVVKEVSLPNLQHAIPAYYVIAPAEASSNLSRFDGVRFGYRCEDPKDLTDLYKRSRAEGFGPEVQRRIMVGAYALSAGYYDAYYLQAQKIRRLIKNDFMSAFAEVDVILGPTTPNPAWKIGAKTNDPIAEYLEDFYTITANLAGLPGLSMPAGFVDGLPVGVQLLAPYFQEGRLLNVAHQYQQVTDWHTRAPEGF.

Residues Lys-76 and Ser-151 each act as charge relay system in the active site. Ser-175 serves as the catalytic Acyl-ester intermediate.

This sequence belongs to the amidase family. GatA subfamily. Heterotrimer of A, B and C subunits.

It carries out the reaction L-glutamyl-tRNA(Gln) + L-glutamine + ATP + H2O = L-glutaminyl-tRNA(Gln) + L-glutamate + ADP + phosphate + H(+). Its function is as follows. Allows the formation of correctly charged Gln-tRNA(Gln) through the transamidation of misacylated Glu-tRNA(Gln) in organisms which lack glutaminyl-tRNA synthetase. The reaction takes place in the presence of glutamine and ATP through an activated gamma-phospho-Glu-tRNA(Gln). The protein is Glutamyl-tRNA(Gln) amidotransferase subunit A of Pseudomonas savastanoi pv. phaseolicola (strain 1448A / Race 6) (Pseudomonas syringae pv. phaseolicola (strain 1448A / Race 6)).